A 989-amino-acid chain; its full sequence is Phosphoenolpyruvate carboxylase (989 aa).

Residues histidine 175 and lysine 630 contribute to the active site.

This sequence belongs to the PEPCase type 1 family. Requires Mg(2+) as cofactor.

It catalyses the reaction oxaloacetate + phosphate = phosphoenolpyruvate + hydrogencarbonate. Functionally, forms oxaloacetate, a four-carbon dicarboxylic acid source for the tricarboxylic acid cycle. The sequence is that of Phosphoenolpyruvate carboxylase from Prochlorococcus marinus (strain MIT 9312).